Reading from the N-terminus, the 505-residue chain is Peroxisome proliferator-activated receptor gamma (505 aa).

Residue T84 is glycosylated (O-linked (GlcNAc) threonine). Phosphoserine; by MAPK is present on S112. Residues 136 to 210 constitute a DNA-binding region (nuclear receptor); it reads AIECRVCGDK…VGMSHNAIRF (75 aa). NR C4-type zinc fingers lie at residues 139-159 and 176-198; these read CRVCGDKASGFHYGVHACEGC and CDLNCRIHKKSRNKCQYCRFQKC. The segment at 205–280 is interaction with FAM120B; it reads HNAIRFGRMP…DKSPFVIYDM (76 aa). The NR LBD domain maps to 238–503; the sequence is DLRALAKHLY…HPLLQEIYKD (266 aa). Residue K252 forms a Glycyl lysine isopeptide (Lys-Gly) (interchain with G-Cter in ubiquitin) linkage. The 9aaTAD motif lies at 495 to 503; that stretch reads PLLQEIYKD.

The protein belongs to the nuclear hormone receptor family. NR1 subfamily. Interacts with FOXO1 (acetylated form). Heterodimer with other nuclear receptors, such as RXRA. The heterodimer with the retinoic acid receptor RXRA is called adipocyte-specific transcription factor ARF6. Interacts with NCOA6 coactivator, leading to a strong increase in transcription of target genes. Interacts with coactivator PPARBP, leading to a mild increase in transcription of target genes. Interacts with NOCA7 in a ligand-inducible manner. Interacts with NCOA1 and NCOA2 LXXLL motifs. Interacts with ASXL1, ASXL2, DNTTIP2, FAM120B, MAP2K1/MEK1, NR0B2, PDPK1, PRDM16, PRMT2 and TGFB1I1. Interacts (when activated by agonist) with PPP5C. Interacts with HELZ2 and THRAP3; the interaction stimulates the transcriptional activity of PPARG. Interacts with PER2, the interaction is ligand dependent and blocks PPARG recruitment to target promoters. Interacts with NOCT. Interacts with ACTN4. Interacts (when in the liganded conformation) with GPS2. Interacts with CRY1 and CRY2 in a ligand-dependent manner. In the absence of hormonal ligand, interacts with TACC1. In macrophages, interacts with PAQR3 and STUB1; the interactions promote PPARG poylubiquitination and STUB1-mediated degradation. O-GlcNAcylation at Thr-84 reduces transcriptional activity in adipocytes. In terms of processing, phosphorylated at basal conditions and dephosphorylated when treated with the ligand. May be dephosphorylated by PPP5C. The phosphorylated form may be inactive and dephosphorylation induces adipogenic activity. Post-translationally, ubiquitinated by E3 ubiquitin-protein ligase complex containing FBXO9; leading to proteasomal degradation. Ubiquitinated at Lys-252 by TRIM55 leading to proteasomal degradation. Ubiquitinated by E3 ubiquitin-protein ligase STUB1/CHIP; leading to proteasomal degradation. In terms of tissue distribution, highest expression in adipose tissue. Lower in liver, heart, kidney, stomach, duodenum and colon.

It localises to the nucleus. The protein localises to the cytoplasm. With respect to regulation, PDPK1 activates its transcriptional activity independently of its kinase activity. In terms of biological role, nuclear receptor that binds peroxisome proliferators such as hypolipidemic drugs and fatty acids. Once activated by a ligand, the nuclear receptor binds to DNA specific PPAR response elements (PPRE) and modulates the transcription of its target genes, such as acyl-CoA oxidase. It therefore controls the peroxisomal beta-oxidation pathway of fatty acids. Key regulator of adipocyte differentiation and glucose homeostasis. ARF6 acts as a key regulator of the tissue-specific adipocyte P2 (aP2) enhancer. Acts as a critical regulator of gut homeostasis by suppressing NF-kappa-B-mediated pro-inflammatory responses. Plays a role in the regulation of cardiovascular circadian rhythms by regulating the transcription of BMAL1 in the blood vessels. The polypeptide is Peroxisome proliferator-activated receptor gamma (PPARG) (Macaca mulatta (Rhesus macaque)).